A 363-amino-acid chain; its full sequence is Flagellar P-ring protein (363 aa).

Positions 1-20 (MKYKLVLAVAVLVFSLPSQA) are cleaved as a signal peptide.

Belongs to the FlgI family. As to quaternary structure, the basal body constitutes a major portion of the flagellar organelle and consists of four rings (L,P,S, and M) mounted on a central rod.

It is found in the periplasm. It localises to the bacterial flagellum basal body. Assembles around the rod to form the L-ring and probably protects the motor/basal body from shearing forces during rotation. The sequence is that of Flagellar P-ring protein from Shewanella baltica (strain OS223).